The chain runs to 303 residues: Glutathione transport system permease protein GsiD (303 aa).

A run of 6 helical transmembrane segments spans residues Ala40 to Ile60, Leu105 to Leu125, Leu144 to Ile164, Ala165 to Gly185, Ile222 to Phe242, and Val266 to Phe286. The ABC transmembrane type-1 domain occupies Ala101–Gly290.

This sequence belongs to the binding-protein-dependent transport system permease family. As to quaternary structure, the complex is composed of two ATP-binding proteins (GsiA), two transmembrane proteins (GsiC and GsiD) and a solute-binding protein (GsiB).

It is found in the cell inner membrane. Part of the ABC transporter complex GsiABCD involved in glutathione import. Probably responsible for the translocation of the substrate across the membrane. The polypeptide is Glutathione transport system permease protein GsiD (Escherichia coli O6:K15:H31 (strain 536 / UPEC)).